A 995-amino-acid chain; its full sequence is Integrator complex subunit 8 (995 aa).

A Phosphothreonine modification is found at Thr18. The short motif at 24 to 29 (WFEFLL) is the WFEF motif element. 4 TPR repeats span residues 250–288 (CQVC…LAEI), 320–356 (SQQL…TLPV), 570–603 (VYIL…VTEF), and 833–866 (HAWL…CSDF).

The protein belongs to the Integrator subunit 8 family. In terms of assembly, component of the Integrator complex, composed of core subunits INTS1, INTS2, INTS3, INTS4, INTS5, INTS6, INTS7, INTS8, INTS9/RC74, INTS10, INTS11/CPSF3L, INTS12, INTS13, INTS14 and INTS15. The core complex associates with protein phosphatase 2A subunits PPP2CA and PPP2R1A, to form the Integrator-PP2A (INTAC) complex.

It localises to the nucleus. The protein localises to the chromosome. Its function is as follows. Component of the integrator complex, a multiprotein complex that terminates RNA polymerase II (Pol II) transcription in the promoter-proximal region of genes. The integrator complex provides a quality checkpoint during transcription elongation by driving premature transcription termination of transcripts that are unfavorably configured for transcriptional elongation: the complex terminates transcription by (1) catalyzing dephosphorylation of the C-terminal domain (CTD) of Pol II subunit POLR2A/RPB1 and SUPT5H/SPT5, (2) degrading the exiting nascent RNA transcript via endonuclease activity and (3) promoting the release of Pol II from bound DNA. The integrator complex is also involved in terminating the synthesis of non-coding Pol II transcripts, such as enhancer RNAs (eRNAs), small nuclear RNAs (snRNAs), telomerase RNAs and long non-coding RNAs (lncRNAs). Within the integrator complex, INTS8 is required for the recruitment of protein phosphatase 2A (PP2A) to transcription pause-release checkpoint. The sequence is that of Integrator complex subunit 8 (Ints8) from Mus musculus (Mouse).